We begin with the raw amino-acid sequence, 203 residues long: DNA-binding transcriptional repressor ScoC (203 aa).

The 145-residue stretch at 13-157 folds into the HTH marR-type domain; the sequence is ALVFTQKMAQ…MMCMIRHIYG (145 aa). Positions 63 to 86 form a DNA-binding region, H-T-H motif; the sequence is ISEIAKFGVMHVSTAFNFSKKLEE. The tract at residues 183–203 is disordered; that stretch reads KKKAKDSAADEPAEELEPVNS. The span at 191–203 shows a compositional bias: acidic residues; sequence ADEPAEELEPVNS.

Homodimer. Interacts with SinR.

In terms of biological role, negative regulator of protease production and sporulation. Acts by binding directly to the promoter of protease genes (aprE and nprE), and by repressing oligopeptide permease operons (appABCDF and oppABCDF), thereby preventing uptake of oligopeptides required for initiation of sporulation. Acts with SinR as a corepressor of epr expression. Binds to non-m6A-5-methylated 5'-GACGAG-3' sites, tested with scpA; when the target is methylated by DnmA, this repressor no longer binds and transcription is up-regulated. This Bacillus subtilis (strain 168) protein is DNA-binding transcriptional repressor ScoC.